A 91-amino-acid polypeptide reads, in one-letter code: Uteroglobin (91 aa).

The first 21 residues, 1-21, serve as a signal peptide directing secretion; sequence MKLAITITLAILALCCSPASA.

It belongs to the secretoglobin family. Antiparallel homodimer; disulfide-linked. Interaction with LMBR1L is controversial. Club cells (nonciliated cells of the surface epithelium of the pulmonary airways). Expressed in lung, uterus, and prostate.

Its subcellular location is the secreted. In terms of biological role, binds phosphatidylcholine, phosphatidylinositol, polychlorinated biphenyls (PCB) and weakly progesterone, potent inhibitor of phospholipase A2. The polypeptide is Uteroglobin (SCGB1A1) (Equus caballus (Horse)).